The following is a 706-amino-acid chain: MCGLAKKLDIEDTLTSLSDQENESLAKPMNDAAEWEHSFSALLEFAADNDVEGFRRQLSDVSCINQMGLWYRRQRFVRRMVLEQRTPLMVASLYGSLDVVKFILSFPEAELNLSCGPDKSTALHCAASGASVNSLDVVKLLLSVGADPNIPDAHGNRPVDVLVVSPHAPGLRTILEEILKKDEIISEDLHASSSSLGSSFRSLSSSPDNGSSLLSLDSVSSPTKPHGTDVTFASEKKEYPIDPSLPDIKSGIYSTDEFRMFSFKIRPCSRAYSHDWTECPFAHPGENARRRDPRKFHYTCVPCPDFKKGSCKQGDMCEYAHGVFECWLHPAQYRTRLCKDGMGCNRRVCFFAHANEELRPLYPSTGSGLPSPRASSAVSASTMDMASVLNMLPGSPSAAQHSFTPPISPSGNGSMPHSSMGWPQQNIPALNLPGSNIQLSRLRSSLNARDIPSEQLSMLHEFEMQRQLAGDMHSPRFMNHSARPKTLNPSNLEELFSAEVASPRFSDQLAVSSVLSPSHKSALLNQLQNNKQSMLSPIKTNLMSSPKNVEQHSLLQQASSPRGGEPISPMNARMKQQLHSRSLSSRDFGSSLPRDLMPTDSGSPLSPWSSWDQTHGSKVDWSVQSDELGRLRKSHSLANNPNREADVSWAQQMLKDSSSPRNGNRVVNMNGARPLTQGGSSVNPHNSDTRESDILDAWLEQLHLDR.

ANK repeat units lie at residues 83–113 and 118–150; these read EQRT…ELNL and DKST…DPNI. The segment covering 211–221 has biased composition (low complexity); sequence SSLLSLDSVSS. The segment at 211–235 is disordered; it reads SSLLSLDSVSSPTKPHGTDVTFASE. 2 consecutive C3H1-type zinc fingers follow at residues 302 to 324 and 332 to 356; these read PCPD…HGVF and QYRT…HANE. Disordered stretches follow at residues 396–427, 545–616, and 652–692; these read PSAA…QQNI, SPKN…QTHG, and QMLK…TRES. 2 stretches are compositionally biased toward polar residues: residues 397–427 and 545–560; these read SAAQ…QQNI and SPKN…QASS. S568 carries the post-translational modification Phosphoserine. Positions 580–592 are enriched in low complexity; that stretch reads SRSLSSRDFGSSL. Composition is skewed to polar residues over residues 600 to 616, 652 to 667, and 677 to 686; these read DSGS…QTHG, QMLK…NRVV, and QGGSSVNPHN.

The sequence is that of Zinc finger CCCH domain-containing protein 56 from Arabidopsis thaliana (Mouse-ear cress).